The following is a 380-amino-acid chain: Succinyl-diaminopimelate desuccinylase (380 aa).

His71 is a binding site for Zn(2+). Asp73 is an active-site residue. Asp104 is a binding site for Zn(2+). Glu138 acts as the Proton acceptor in catalysis. Positions 139, 167, and 353 each coordinate Zn(2+).

This sequence belongs to the peptidase M20A family. DapE subfamily. Homodimer. Requires Zn(2+) as cofactor. It depends on Co(2+) as a cofactor.

It catalyses the reaction N-succinyl-(2S,6S)-2,6-diaminopimelate + H2O = (2S,6S)-2,6-diaminopimelate + succinate. It participates in amino-acid biosynthesis; L-lysine biosynthesis via DAP pathway; LL-2,6-diaminopimelate from (S)-tetrahydrodipicolinate (succinylase route): step 3/3. Catalyzes the hydrolysis of N-succinyl-L,L-diaminopimelic acid (SDAP), forming succinate and LL-2,6-diaminopimelate (DAP), an intermediate involved in the bacterial biosynthesis of lysine and meso-diaminopimelic acid, an essential component of bacterial cell walls. The sequence is that of Succinyl-diaminopimelate desuccinylase from Shewanella baltica (strain OS185).